A 490-amino-acid polypeptide reads, in one-letter code: Beta-N-acetyl-D-glucosaminide beta-1,4-N-acetylglucosaminyl-transferase (490 aa).

The Cytoplasmic segment spans residues 1–30 (MYLVVCWGRVTGNMISTRHCFSRCKSRSVR). A helical; Signal-anchor for type II membrane protein membrane pass occupies residues 31–50 (VIKATAMLFVAAMLFLALHM). Residues N51, N82, N441, N459, and N485 are each glycosylated (N-linked (GlcNAc...) asparagine). Residues 51 to 490 (NFSHEASQQN…YLTGNFTIIS (440 aa)) lie on the Lumenal side of the membrane.

This sequence belongs to the glycosyltransferase 7 family.

The protein resides in the golgi apparatus membrane. It catalyses the reaction an N-acetyl-beta-D-glucosaminyl derivative + UDP-N-acetyl-alpha-D-glucosamine = an N-acetyl-beta-D-glucosaminyl-(1-&gt;4)-N-acetyl-beta-D-glucosaminyl derivative + UDP + H(+). It participates in protein modification; protein glycosylation. The protein is Beta-N-acetyl-D-glucosaminide beta-1,4-N-acetylglucosaminyl-transferase (GNT) of Lymnaea stagnalis (Great pond snail).